The chain runs to 477 residues: 3-isopropylmalate dehydratase large subunit 1 (477 aa).

The [4Fe-4S] cluster site is built by Cys357, Cys417, and Cys420.

The protein belongs to the aconitase/IPM isomerase family. LeuC type 1 subfamily. Heterodimer of LeuC and LeuD. [4Fe-4S] cluster serves as cofactor.

The catalysed reaction is (2R,3S)-3-isopropylmalate = (2S)-2-isopropylmalate. It functions in the pathway amino-acid biosynthesis; L-leucine biosynthesis; L-leucine from 3-methyl-2-oxobutanoate: step 2/4. Its function is as follows. Catalyzes the isomerization between 2-isopropylmalate and 3-isopropylmalate, via the formation of 2-isopropylmaleate. The protein is 3-isopropylmalate dehydratase large subunit 1 of Bradyrhizobium diazoefficiens (strain JCM 10833 / BCRC 13528 / IAM 13628 / NBRC 14792 / USDA 110).